Reading from the N-terminus, the 765-residue chain is Periplasmic beta-glucosidase (765 aa).

The first 20 residues, 1–20 (MKWLCSVGIAVSLALQPALA), serve as a signal peptide directing secretion. The active site involves aspartate 287.

This sequence belongs to the glycosyl hydrolase 3 family.

The protein resides in the periplasm. It catalyses the reaction Hydrolysis of terminal, non-reducing beta-D-glucosyl residues with release of beta-D-glucose.. The chain is Periplasmic beta-glucosidase (bglX) from Escherichia coli (strain K12).